A 554-amino-acid polypeptide reads, in one-letter code: Dihydroxy-acid dehydratase (554 aa).

Residue Asp-78 coordinates Mg(2+). Position 119 (Cys-119) interacts with [2Fe-2S] cluster. 2 residues coordinate Mg(2+): Asp-120 and Lys-121. Residue Lys-121 is modified to N6-carboxylysine. A [2Fe-2S] cluster-binding site is contributed by Cys-192. Glu-443 is a Mg(2+) binding site. Ser-469 functions as the Proton acceptor in the catalytic mechanism.

It belongs to the IlvD/Edd family. In terms of assembly, homodimer. [2Fe-2S] cluster serves as cofactor. The cofactor is Mg(2+).

It catalyses the reaction (2R)-2,3-dihydroxy-3-methylbutanoate = 3-methyl-2-oxobutanoate + H2O. It carries out the reaction (2R,3R)-2,3-dihydroxy-3-methylpentanoate = (S)-3-methyl-2-oxopentanoate + H2O. It participates in amino-acid biosynthesis; L-isoleucine biosynthesis; L-isoleucine from 2-oxobutanoate: step 3/4. The protein operates within amino-acid biosynthesis; L-valine biosynthesis; L-valine from pyruvate: step 3/4. Its function is as follows. Functions in the biosynthesis of branched-chain amino acids. Catalyzes the dehydration of (2R,3R)-2,3-dihydroxy-3-methylpentanoate (2,3-dihydroxy-3-methylvalerate) into 2-oxo-3-methylpentanoate (2-oxo-3-methylvalerate) and of (2R)-2,3-dihydroxy-3-methylbutanoate (2,3-dihydroxyisovalerate) into 2-oxo-3-methylbutanoate (2-oxoisovalerate), the penultimate precursor to L-isoleucine and L-valine, respectively. This Shouchella clausii (strain KSM-K16) (Alkalihalobacillus clausii) protein is Dihydroxy-acid dehydratase.